The primary structure comprises 113 residues: Hydrogenase maturation factor HypA (113 aa).

Position 2 (His2) interacts with Ni(2+). Zn(2+) is bound by residues Cys73, Cys76, Cys89, and Cys92.

This sequence belongs to the HypA/HybF family.

Its function is as follows. Involved in the maturation of [NiFe] hydrogenases. Required for nickel insertion into the metal center of the hydrogenase. This is Hydrogenase maturation factor HypA from Cereibacter sphaeroides (strain ATCC 17023 / DSM 158 / JCM 6121 / CCUG 31486 / LMG 2827 / NBRC 12203 / NCIMB 8253 / ATH 2.4.1.) (Rhodobacter sphaeroides).